Here is a 195-residue protein sequence, read N- to C-terminus: Imidazoleglycerol-phosphate dehydratase (195 aa).

The protein belongs to the imidazoleglycerol-phosphate dehydratase family.

It localises to the cytoplasm. It catalyses the reaction D-erythro-1-(imidazol-4-yl)glycerol 3-phosphate = 3-(imidazol-4-yl)-2-oxopropyl phosphate + H2O. It participates in amino-acid biosynthesis; L-histidine biosynthesis; L-histidine from 5-phospho-alpha-D-ribose 1-diphosphate: step 6/9. This Koribacter versatilis (strain Ellin345) protein is Imidazoleglycerol-phosphate dehydratase.